The sequence spans 174 residues: Secretion monitor (174 aa).

Residues M1–A35 form the signal peptide.

Belongs to the SecM family.

The protein localises to the cytoplasm. Its subcellular location is the cytosol. It localises to the periplasm. Functionally, regulates secA expression by translational coupling of the secM secA operon. Translational pausing at a specific Pro residue 5 residues before the end of the protein may allow disruption of a mRNA repressor helix that normally suppresses secA translation initiation. The sequence is that of Secretion monitor from Photorhabdus laumondii subsp. laumondii (strain DSM 15139 / CIP 105565 / TT01) (Photorhabdus luminescens subsp. laumondii).